The chain runs to 794 residues: Ribonucleoside-diphosphate reductase large subunit (794 aa).

Residues 1-92 (MHVIKRDGGQ…VSNLHKETKK (92 aa)) enclose the ATP-cone domain. Residues 5–6 (KR), 11–17 (EGVMFDK), threonine 53, and aspartate 57 contribute to the ATP site. GDP is bound by residues serine 202 and serine 217. A disulfide bridge connects residues cysteine 218 and cysteine 444. DTTP is bound by residues 226 to 228 (DSI), lysine 243, arginine 256, and 263 to 264 (AG). Asparagine 427 provides a ligand contact to GDP. The active-site Proton acceptor is asparagine 427. Cysteine 429 functions as the Cysteine radical intermediate in the catalytic mechanism. GDP-binding positions include glutamate 431 and 604–607 (TAST). Glutamate 431 acts as the Proton acceptor in catalysis.

This sequence belongs to the ribonucleoside diphosphate reductase large chain family. In terms of assembly, heterodimer of a large and a small subunit.

The protein resides in the cytoplasm. The catalysed reaction is a 2'-deoxyribonucleoside 5'-diphosphate + [thioredoxin]-disulfide + H2O = a ribonucleoside 5'-diphosphate + [thioredoxin]-dithiol. Under complex allosteric control mediated by deoxynucleoside triphosphates and ATP binding to separate specificity and activation sites on the M1 subunit. The type of nucleotide bound at the specificity site determines substrate preference. It seems probable that ATP makes the enzyme reduce CDP and UDP, dGTP favors ADP reduction and dTTP favors GDP reduction. Stimulated by ATP and inhibited by dATP binding to the activity site. Functionally, provides the precursors necessary for DNA synthesis. Catalyzes the biosynthesis of deoxyribonucleotides from the corresponding ribonucleotides. This is Ribonucleoside-diphosphate reductase large subunit (rrm1) from Danio rerio (Zebrafish).